Reading from the N-terminus, the 183-residue chain is SAYSvFN domain-containing protein 1 (183 aa).

The Cytoplasmic segment spans residues 1-105; the sequence is MEQRLAEFRA…SFLTNITFLK (105 aa). Residues 11 to 36 form a disordered region; it reads ARKRAGLAAQPPAASQGAQTPGEKAE. Residues 16-36 are compositionally biased toward low complexity; sequence GLAAQPPAASQGAQTPGEKAE. The segment at 91–105 is middle helical (MH); sequence SCWDQSFLTNITFLK. The helical intramembrane region spans 106 to 126; the sequence is VLLWLVLLGLFVELEFGLAYF. The Cytoplasmic portion of the chain corresponds to 127 to 183; it reads VLSLFYWMYVGTRGPEEKKEGEKSAYSVFNPGCEAIQGTLTAEQLERELQLRPLAGR.

Belongs to the SAYSD1 family. As to quaternary structure, associates (via N-terminus) with ribosomes.

Its subcellular location is the endoplasmic reticulum membrane. The protein localises to the cytoplasmic vesicle membrane. Ufmylation 'reader' component of a translocation-associated quality control pathway, a mechanism that takes place when a ribosome has stalled during translation, and which is required to degrade clogged substrates. Specifically recognizes and binds ufmylated ribosomes when a ribosome has stalled, promoting the transport of stalled nascent chain via the TRAPP complex to lysosomes for degradation. The sequence is that of SAYSvFN domain-containing protein 1 from Homo sapiens (Human).